Reading from the N-terminus, the 625-residue chain is Chaperone protein HtpG (625 aa).

Positions 1–341 are a; substrate-binding; that stretch reads MERKEFKAES…SEDLSLNISR (341 aa). The segment at 342–551 is b; it reads EMLQHDRQLK…EGEVSIEMEK (210 aa). The segment at 552–625 is c; that stretch reads VLRAMPDNQN…FSNDICKVMA (74 aa).

It belongs to the heat shock protein 90 family. In terms of assembly, homodimer.

It localises to the cytoplasm. Molecular chaperone. Has ATPase activity. In Halalkalibacterium halodurans (strain ATCC BAA-125 / DSM 18197 / FERM 7344 / JCM 9153 / C-125) (Bacillus halodurans), this protein is Chaperone protein HtpG.